Consider the following 509-residue polypeptide: Photosystem II CP47 reaction center protein (509 aa).

6 helical membrane-spanning segments follow: residues S21–S36, I101–W115, G140–F156, I203–T218, V237–V252, and V457–R472.

It belongs to the PsbB/PsbC family. PsbB subfamily. PSII is composed of 1 copy each of membrane proteins PsbA, PsbB, PsbC, PsbD, PsbE, PsbF, PsbH, PsbI, PsbJ, PsbK, PsbL, PsbM, PsbT, PsbX, PsbY, PsbZ, Psb30/Ycf12, peripheral proteins PsbO, CyanoQ (PsbQ), PsbU, PsbV and a large number of cofactors. It forms dimeric complexes. Requires Binds multiple chlorophylls. PSII binds additional chlorophylls, carotenoids and specific lipids. as cofactor.

Its subcellular location is the cellular thylakoid membrane. Functionally, one of the components of the core complex of photosystem II (PSII). It binds chlorophyll and helps catalyze the primary light-induced photochemical processes of PSII. PSII is a light-driven water:plastoquinone oxidoreductase, using light energy to abstract electrons from H(2)O, generating O(2) and a proton gradient subsequently used for ATP formation. The protein is Photosystem II CP47 reaction center protein of Nostoc sp. (strain PCC 7120 / SAG 25.82 / UTEX 2576).